The primary structure comprises 707 residues: Caprin-1 (707 aa).

Composition is skewed to low complexity over residues 1 to 15 (MPSA…SKSS) and 22 to 43 (GSSG…PATG). Residues 1 to 48 (MPSATSHSGSGSKSSGPPPPSGSSGSEAAAGAAAPASQHPATGTGAVQ) form a disordered region. Proline 2 is subject to N-acetylproline. At serine 10 the chain carries Phosphoserine. Positions 58–92 (VIDKKLRNLEKKKGKLDDYQERMNKGERLNQDQLD) form a coiled coil. The residue at position 113 (serine 113) is a Phosphoserine. A coiled-coil region spans residues 123–151 (KTIKKTARREQLMREEAEQKRLKTVLELQ). Omega-N-methylarginine is present on arginine 163. Residues 325–335 (LQQQPQAASPS) are compositionally biased toward low complexity. The segment at 325–347 (LQQQPQAASPSVPEPHSLTPVAQ) is disordered. 2 positions are modified to phosphoserine: serine 333 and serine 341. Positions 358-379 (QDLMAQMQGPYNFIQDSMLDFE) are G3BP1-binding. Disordered stretches follow at residues 412–496 (ESRL…AGTS), 526–558 (PANE…EQTE), and 570–707 (TYHG…QQVN). The span at 431-452 (PLVSSTSEGYTASQPLYQPSHA) shows a compositional bias: polar residues. The span at 453-462 (TEQRPQKEPM) shows a compositional bias: basic and acidic residues. Over residues 465 to 474 (IQATISLNTD) the composition is skewed to polar residues. Low complexity predominate over residues 475–489 (QTTASSSLPAASQPQ). Polar residues-rich tracts occupy residues 533 to 552 (LKQQ…SQPH) and 572 to 603 (HGSQ…QPYY). Tyrosine 623 is subject to Phosphotyrosine. Omega-N-methylarginine occurs at positions 624 and 631. Phosphotyrosine is present on residues tyrosine 634 and tyrosine 637. Arginine 638 is modified (omega-N-methylarginine). Over residues 640-655 (SFSNTPNSGYSQSQFT) the composition is skewed to polar residues. O-linked (GlcNAc) serine glycans are attached at residues serine 642 and serine 647. 4 positions are modified to phosphotyrosine: tyrosine 649, tyrosine 660, tyrosine 663, and tyrosine 668. Composition is skewed to low complexity over residues 674–684 (RGSGQSGPRGA) and 695–707 (NRGM…QQVN). Asymmetric dimethylarginine; alternate is present on arginine 696. Omega-N-methylarginine; alternate is present on arginine 696.

The protein belongs to the caprin family. May form homomultimers. Interacts with G3BP1; interaction is direct and promotes stress granule formation. Interacts with G3BP2; interaction is direct and promotes stress granule formation. Interacts with PQBP1. Interacts with DDX3X. Interacts (when phosphorylated by EPHA4) with FMR1; interaction with FMR1 promotes formation of a membraneless compartment. In terms of processing, tyrosine phosphorylation by EPHA4 promotes interaction with FMR1 and liquid-liquid phase separation (LLPS) for the formation of a membraneless compartment that concentrates mRNAs with associated regulatory factors. O-glycosylated (O-GlcNAcylated), in a cell cycle-dependent manner. O-glycosylation by OGT inhibit ability to undergo liquid-liquid phase separation (LLPS). In terms of tissue distribution, highest expression in thymus, spleen and brain (at protein level). Lower levels in kidney, muscle and liver (at protein level).

It is found in the cytoplasm. Its subcellular location is the cytoplasmic ribonucleoprotein granule. The protein resides in the cytosol. It localises to the cell projection. The protein localises to the dendrite. It is found in the lamellipodium. With respect to regulation, ability to mediate liquid-liquid phase separation is regulated by ATP: moderate concentrations of ATP enhance phase separation, whereas high concentrations of ATP lead to inhibition of phase separation. MRNA-binding protein that acts as a regulator of mRNAs transport, translation and/or stability, and which is involved in neurogenesis, synaptic plasticity in neurons and cell proliferation and migration in multiple cell types. Plays an essential role in cytoplasmic stress granule formation. Acts as an mRNA regulator by mediating formation of some phase-separated membraneless compartment: undergoes liquid-liquid phase separation upon binding to target mRNAs, leading to assemble mRNAs into cytoplasmic ribonucleoprotein granules that concentrate mRNAs with associated regulatory factors. Undergoes liquid-liquid phase separation following phosphorylation and interaction with FMR1, promoting formation of cytoplasmic ribonucleoprotein granules that concentrate mRNAs with factors that inhibit translation and mediate deadenylation of target mRNAs. In these cytoplasmic ribonucleoprotein granules, CAPRIN1 mediates recruitment of CNOT7 deadenylase, leading to mRNA deadenylation and degradation. Binds directly and selectively to MYC and CCND2 mRNAs. In neuronal cells, directly binds to several mRNAs associated with RNA granules, including BDNF, CAMK2A, CREB1, MAP2, NTRK2 mRNAs, as well as to GRIN1 and KPNB1 mRNAs, but not to rRNAs. The chain is Caprin-1 (Caprin1) from Mus musculus (Mouse).